Reading from the N-terminus, the 463-residue chain is tRNA-2-methylthio-N(6)-dimethylallyladenosine synthase (463 aa).

The region spanning 19–135 (RSYWITTFGC…LENLLGKVDL (117 aa)) is the MTTase N-terminal domain. C28, C64, C98, C170, C174, and C177 together coordinate [4Fe-4S] cluster. One can recognise a Radical SAM core domain in the interval 156 to 393 (RESSICGWVN…NALVEKTARN (238 aa)). The 68-residue stretch at 396–463 (QRYINNIESV…RPFSLTGELC (68 aa)) folds into the TRAM domain.

It belongs to the methylthiotransferase family. MiaB subfamily. Monomer. It depends on [4Fe-4S] cluster as a cofactor.

It localises to the cytoplasm. The enzyme catalyses N(6)-dimethylallyladenosine(37) in tRNA + (sulfur carrier)-SH + AH2 + 2 S-adenosyl-L-methionine = 2-methylsulfanyl-N(6)-dimethylallyladenosine(37) in tRNA + (sulfur carrier)-H + 5'-deoxyadenosine + L-methionine + A + S-adenosyl-L-homocysteine + 2 H(+). In terms of biological role, catalyzes the methylthiolation of N6-(dimethylallyl)adenosine (i(6)A), leading to the formation of 2-methylthio-N6-(dimethylallyl)adenosine (ms(2)i(6)A) at position 37 in tRNAs that read codons beginning with uridine. This is tRNA-2-methylthio-N(6)-dimethylallyladenosine synthase from Prochlorococcus marinus (strain MIT 9312).